The following is a 185-amino-acid chain: Comitin (185 aa).

The Bulb-type lectin domain occupies 1–123 (MELLRQGEHL…YKQILYSSKP (123 aa)). The tract at residues 138–185 (SGHPQSAYPPQQPGYGYPAQPGYPPQPGYPPQHGYPPQHGYPQQPGYY) is disordered. Over residues 141 to 157 (PQSAYPPQQPGYGYPAQ) the composition is skewed to low complexity. Tandem repeats lie at residues 153–158 (GYPAQP), 159–164 (GYPPQP), 165–170 (GYPPQH), 171–176 (GYPPQH), and 177–182 (GYPQQP). The tract at residues 153–182 (GYPAQPGYPPQPGYPPQHGYPPQHGYPQQP) is 5 X 6 AA tandem repeats of G-Y-P-X-Q-[PH]. A compositionally biased stretch (pro residues) spans 158-171 (PGYPPQPGYPPQHG). Low complexity predominate over residues 172–185 (YPPQHGYPQQPGYY).

In terms of assembly, homodimer in solution. Post-translationally, the N-terminus is blocked.

Its subcellular location is the golgi apparatus membrane. The protein localises to the endomembrane system. It is found in the cytoplasm. The protein resides in the cytoskeleton. In terms of biological role, may have a role in cell motility. It has high affinity for both G-actin and F-actin. Binds to vesicle membranes via mannose residues and, by way of its interaction with actin, links these membranes to the cytoskeleton. The chain is Comitin (comA) from Dictyostelium discoideum (Social amoeba).